The primary structure comprises 269 residues: Surfeit locus protein 4 (269 aa).

The next 5 helical transmembrane spans lie at 64–84 (FLAT…CVLI), 92–112 (YACF…SILW), 179–199 (FFSI…AIGF), 203–223 (LAAL…NAFW), and 242–262 (TTSV…GVSM). The Di-lysine motif signature appears at 266-269 (KKEW).

The protein belongs to the SURF4 family.

It is found in the endoplasmic reticulum membrane. The protein localises to the endoplasmic reticulum-Golgi intermediate compartment membrane. It localises to the golgi apparatus membrane. Functionally, endoplasmic reticulum cargo receptor that mediates the export of lipoproteins by recruiting cargos into COPII vesicles to facilitate their secretion. Acts as a cargo receptor for lipoproteins bearing both APOB and APOA1, thereby regulating lipoprotein delivery and the maintenance of lipid homeostasis. The protein is Surfeit locus protein 4 of Takifugu rubripes (Japanese pufferfish).